Here is a 117-residue protein sequence, read N- to C-terminus: Large ribosomal subunit protein uL18 (117 aa).

It belongs to the universal ribosomal protein uL18 family. Part of the 50S ribosomal subunit; part of the 5S rRNA/L5/L18/L25 subcomplex. Contacts the 5S and 23S rRNAs.

Functionally, this is one of the proteins that bind and probably mediate the attachment of the 5S RNA into the large ribosomal subunit, where it forms part of the central protuberance. In Vibrio atlanticus (strain LGP32) (Vibrio splendidus (strain Mel32)), this protein is Large ribosomal subunit protein uL18.